The following is a 122-amino-acid chain: Biogenesis of lysosome-related organelles complex 1 subunit BLS1 (122 aa).

At serine 33 the chain carries Phosphoserine.

It belongs to the BLOC1S1 family. Component of the biogenesis of lysosome-related organelles complex-1 (BLOC-1) composed of at least BLI1, BLS1, CNL1, KXD1, SNN1 and VAB2.

The protein resides in the endosome. In terms of biological role, component of the biogenesis of lysosome-related organelles complex-1 (BLOC-1), a complex involved in endosomal cargo sorting. This is Biogenesis of lysosome-related organelles complex 1 subunit BLS1 (BLS1) from Saccharomyces cerevisiae (strain YJM789) (Baker's yeast).